A 205-amino-acid chain; its full sequence is uncharacterized protein (205 aa).

A run of 3 helical transmembrane segments spans residues 45-65, 119-139, and 144-164; these read LFFY…FLVI, VFWL…VTAF, and FEWM…LWGY.

Belongs to the TVP23 family.

It localises to the membrane. This is an uncharacterized protein from Caenorhabditis elegans.